The following is a 279-amino-acid chain: Zinc-finger homeodomain protein 1 (279 aa).

The segment covering 1–30 (MEFEDNNNNNDEEQEEDMNLHEEEEDDDAV) has biased composition (acidic residues). The interval 1–62 (MEFEDNNNNN…TTSTGGGGGF (62 aa)) is disordered. Residues 75–124 (FRECLKNQAVNIGGHAVDGCGEFMPAGIEGTIDALKCAACGCHRNFHRKE) form a ZF-HD dimerization-type zinc finger. Disordered stretches follow at residues 128 to 199 (FHHA…TKFT) and 245 to 279 (NNKH…QDQP). Positions 134-143 (QHQPPPPPPG) are enriched in pro residues. The homeobox; atypical DNA-binding region spans 191 to 254 (RKRHRTKFTA…NNKHTLGKSP (64 aa)).

Homo- and heterodimer with other ZFHD proteins. Interacts with MIF1 and MIF2; these interactions prevent nuclear localization and DNA-binding to inhibit transcription regulation activity. Binds to ZHD2, ZHD3, ZHD4, ZHD5, ZHD6, ZHD7, ZHD8, ZHD9, ZHD10 and ZHD11. Mostly expressed in flowers and inflorescence.

The protein localises to the nucleus. Putative transcription factor. In Arabidopsis thaliana (Mouse-ear cress), this protein is Zinc-finger homeodomain protein 1 (ZHD1).